Consider the following 203-residue polypeptide: Glycerol-3-phosphate acyltransferase (203 aa).

Transmembrane regions (helical) follow at residues 3-23 (ILLA…VVVS), 51-71 (KAAI…VWLV), 74-94 (FGIG…LGHL), 116-136 (AVHP…AFFF), 140-160 (SLAA…LFGT), and 164-178 (PVAW…LLIW).

Belongs to the PlsY family. Probably interacts with PlsX.

It is found in the cell inner membrane. It catalyses the reaction an acyl phosphate + sn-glycerol 3-phosphate = a 1-acyl-sn-glycero-3-phosphate + phosphate. It functions in the pathway lipid metabolism; phospholipid metabolism. Its function is as follows. Catalyzes the transfer of an acyl group from acyl-phosphate (acyl-PO(4)) to glycerol-3-phosphate (G3P) to form lysophosphatidic acid (LPA). This enzyme utilizes acyl-phosphate as fatty acyl donor, but not acyl-CoA or acyl-ACP. In Burkholderia mallei (strain ATCC 23344), this protein is Glycerol-3-phosphate acyltransferase.